The sequence spans 87 residues: Sec-independent protein translocase protein TatA (87 aa).

A helical membrane pass occupies residues 3-23 (IFGIGLPEMIVILVVALLIFG). Residues 61–87 (EGVKVSTSASEPEKVVDVSSATNTNKN) are disordered.

Belongs to the TatA/E family. Forms a complex with TatC.

The protein localises to the cell inner membrane. Its function is as follows. Part of the twin-arginine translocation (Tat) system that transports large folded proteins containing a characteristic twin-arginine motif in their signal peptide across membranes. TatA could form the protein-conducting channel of the Tat system. The chain is Sec-independent protein translocase protein TatA from Trichodesmium erythraeum (strain IMS101).